Here is an 80-residue protein sequence, read N- to C-terminus: Defensin-like protein 13 (80 aa).

The N-terminal stretch at 1–29 (MAKSATIVTLFFAALVFFAALEAPMVVEA) is a signal peptide. Position 30 is a pyrrolidone carboxylic acid (Gln30). 4 cysteine pairs are disulfide-bonded: Cys33-Cys80, Cys44-Cys65, Cys50-Cys74, and Cys54-Cys76.

It belongs to the DEFL family. In terms of assembly, forms oligomers in its native state. Expressed predominantly in siliques and dry seeds.

The protein localises to the secreted. Its function is as follows. Confers broad-spectrum resistance to pathogens. Possesses antifungal activity sensitive to inorganic cations in vitro. This is Defensin-like protein 13 (PDF1.1) from Arabidopsis thaliana (Mouse-ear cress).